The sequence spans 255 residues: Fe(3+) dicitrate transport ATP-binding protein FecE (255 aa).

In terms of domain architecture, ABC transporter spans 3–238; the sequence is LRTENLTVSY…GLLRTVFSVE (236 aa). 35–42 is a binding site for ATP; it reads GPNGCGKS.

Belongs to the ABC transporter superfamily. The complex is composed of two ATP-binding proteins (FecE), two transmembrane proteins (FecC and FecD) and a solute-binding protein (FecB).

The protein localises to the cell inner membrane. The catalysed reaction is iron(III) dicitrate(out) + ATP + H2O = iron(III) dicitrate(in) + ADP + phosphate + H(+). Functionally, part of the ABC transporter complex FecBCDE involved in citrate-dependent Fe(3+) uptake. Binds ATP. Probably responsible for energy coupling to the transport system. This chain is Fe(3+) dicitrate transport ATP-binding protein FecE, found in Escherichia coli (strain K12).